The sequence spans 124 residues: uncharacterized protein (124 aa).

A helical membrane pass occupies residues 83–100 (VTCFSLYTICYRIVLIWA).

It is found in the membrane. This is an uncharacterized protein from Saccharomyces cerevisiae (strain ATCC 204508 / S288c) (Baker's yeast).